The chain runs to 555 residues: Glutamine--tRNA ligase (555 aa).

Positions 34 to 44 match the 'HIGH' region motif; it reads PEPNGYLHIGH. Residues 35 to 37 and 41 to 47 contribute to the ATP site; these read EPN and HIGHAKS. Positions 67 and 212 each coordinate L-glutamine. ATP is bound by residues Thr231, 261–262, and 269–271; these read RL and MSK. The 'KMSKS' region signature appears at 268-272; that stretch reads VMSKR. The interval 317 to 324 is interaction with tRNA; the sequence is TKQDNTIE.

This sequence belongs to the class-I aminoacyl-tRNA synthetase family. In terms of assembly, monomer.

The protein localises to the cytoplasm. The enzyme catalyses tRNA(Gln) + L-glutamine + ATP = L-glutaminyl-tRNA(Gln) + AMP + diphosphate. The polypeptide is Glutamine--tRNA ligase (Enterobacter sp. (strain 638)).